A 90-amino-acid chain; its full sequence is Phosphocarrier protein NPr (90 aa).

The HPr domain maps to 2-90 (TVKQTVEITN…ALFNSGFDED (89 aa)). The active-site Pros-phosphohistidine intermediate is H16.

It belongs to the HPr family.

It is found in the cytoplasm. In terms of biological role, component of the phosphoenolpyruvate-dependent nitrogen-metabolic phosphotransferase system (nitrogen-metabolic PTS), that seems to be involved in regulating nitrogen metabolism. The phosphoryl group from phosphoenolpyruvate (PEP) is transferred to the phosphoryl carrier protein NPr by enzyme I-Ntr. Phospho-NPr then transfers it to EIIA-Ntr. Could function in the transcriptional regulation of sigma-54 dependent operons in conjunction with the NPr (PtsO) and EIIA-Ntr (PtsN) proteins. This chain is Phosphocarrier protein NPr (ptsO), found in Escherichia coli O157:H7.